A 481-amino-acid polypeptide reads, in one-letter code: MKVTTEQLPKRIVALEIEPDAATIEKELNKAAQRIASKVAIPGFRKGKAPRFIVENYYGKAAILEEATDEIINVAFRAALEQENIKPVAQASLEKLEPEPFRFRILVPVEPEVILPDYKAITVDLTEEPVTDATLEVALDQAREKHVVLSAPEGEPEAAEGDQLTATVQTLVDGVPLHKLDEEDDDDDDDDDDDDDDDDDDDDDDDDDDDDDDDDDDDDDDDDDDDDDDDDDEGEPTTLIMEERRIVPELYAGLKGIKAGETREISAHLPADHPDARVADKDVVFKVTVSEIQNRQLPAWEELPGLEEFEGDLDAYKADLMERLVKNSGDHHRRNVLNQYLEEVVAATSFDVPDALIAERAHELLHEQVESLARYGINMEQYLQIVGKTHDEAVQELLPRGEESLKSSLVVRKIVEAEGLSVDESEINAEIERILNDFPDAQRGPARRRLEKELRPQVAGSLLDKKLQDRLVELATGNAAA.

A PPIase FKBP-type domain is found at 161 to 298; it reads GDQLTATVQT…VSEIQNRQLP (138 aa). Residues 173–245 form a disordered region; the sequence is DGVPLHKLDE…PTTLIMEERR (73 aa). Over residues 182–235 the composition is skewed to acidic residues; sequence EEDDDDDDDDDDDDDDDDDDDDDDDDDDDDDDDDDDDDDDDDDDDDDDDDDEGE.

The protein belongs to the FKBP-type PPIase family. Tig subfamily.

It is found in the cytoplasm. It catalyses the reaction [protein]-peptidylproline (omega=180) = [protein]-peptidylproline (omega=0). Its function is as follows. Involved in protein export. Acts as a chaperone by maintaining the newly synthesized protein in an open conformation. Functions as a peptidyl-prolyl cis-trans isomerase. This is Trigger factor from Herpetosiphon aurantiacus (strain ATCC 23779 / DSM 785 / 114-95).